The following is a 163-amino-acid chain: Phosphopantetheine adenylyltransferase (163 aa).

Ser10 is a substrate binding site. Residues 10–11 and His18 contribute to the ATP site; that span reads SF. The substrate site is built by Lys42, Leu74, and Arg88. Residues 89-91, Glu99, and 124-130 contribute to the ATP site; these read GLR and YSFLSSS.

The protein belongs to the bacterial CoaD family. Homohexamer. Mg(2+) serves as cofactor.

The protein localises to the cytoplasm. It carries out the reaction (R)-4'-phosphopantetheine + ATP + H(+) = 3'-dephospho-CoA + diphosphate. The protein operates within cofactor biosynthesis; coenzyme A biosynthesis; CoA from (R)-pantothenate: step 4/5. Reversibly transfers an adenylyl group from ATP to 4'-phosphopantetheine, yielding dephospho-CoA (dPCoA) and pyrophosphate. This chain is Phosphopantetheine adenylyltransferase, found in Bacillus anthracis (strain A0248).